The sequence spans 355 residues: Probable GTP 3',8-cyclase (355 aa).

Residues 5–233 (AYGRPLKDLR…GRLHNRRVYR (229 aa)) enclose the Radical SAM core domain. R14 contacts GTP. 3 residues coordinate [4Fe-4S] cluster: C21, C25, and C28. K69 provides a ligand contact to GTP. An S-adenosyl-L-methionine-binding site is contributed by G73. T97 is a GTP binding site. S121 serves as a coordination point for S-adenosyl-L-methionine. K157 provides a ligand contact to GTP. [4Fe-4S] cluster contacts are provided by C252 and C255. Position 257 to 259 (257 to 259 (RVR)) interacts with GTP. C269 serves as a coordination point for [4Fe-4S] cluster.

It belongs to the radical SAM superfamily. MoaA family. Requires [4Fe-4S] cluster as cofactor.

The catalysed reaction is GTP + AH2 + S-adenosyl-L-methionine = (8S)-3',8-cyclo-7,8-dihydroguanosine 5'-triphosphate + 5'-deoxyadenosine + L-methionine + A + H(+). Its pathway is cofactor biosynthesis; molybdopterin biosynthesis. Catalyzes the cyclization of GTP to (8S)-3',8-cyclo-7,8-dihydroguanosine 5'-triphosphate. The protein is Probable GTP 3',8-cyclase of Aeropyrum pernix (strain ATCC 700893 / DSM 11879 / JCM 9820 / NBRC 100138 / K1).